Here is a 501-residue protein sequence, read N- to C-terminus: Bifunctional purine biosynthesis protein PurH (501 aa).

Positions 1–144 (MKKRALISVF…KNFQDVVVIS (144 aa)) constitute an MGS-like domain.

The protein belongs to the PurH family.

The catalysed reaction is (6R)-10-formyltetrahydrofolate + 5-amino-1-(5-phospho-beta-D-ribosyl)imidazole-4-carboxamide = 5-formamido-1-(5-phospho-D-ribosyl)imidazole-4-carboxamide + (6S)-5,6,7,8-tetrahydrofolate. The enzyme catalyses IMP + H2O = 5-formamido-1-(5-phospho-D-ribosyl)imidazole-4-carboxamide. The protein operates within purine metabolism; IMP biosynthesis via de novo pathway; 5-formamido-1-(5-phospho-D-ribosyl)imidazole-4-carboxamide from 5-amino-1-(5-phospho-D-ribosyl)imidazole-4-carboxamide (10-formyl THF route): step 1/1. It functions in the pathway purine metabolism; IMP biosynthesis via de novo pathway; IMP from 5-formamido-1-(5-phospho-D-ribosyl)imidazole-4-carboxamide: step 1/1. In Clostridium botulinum (strain Eklund 17B / Type B), this protein is Bifunctional purine biosynthesis protein PurH.